Reading from the N-terminus, the 548-residue chain is Chaperonin GroEL (548 aa).

ATP is bound by residues 30 to 33 (TLGP), lysine 51, 87 to 91 (DGTTT), glycine 415, and aspartate 496. The tract at residues 527–548 (SDKEDAMPPMRGGMGGMGGMDF) is disordered. Positions 538-548 (GGMGGMGGMDF) are enriched in gly residues.

It belongs to the chaperonin (HSP60) family. Forms a cylinder of 14 subunits composed of two heptameric rings stacked back-to-back. Interacts with the co-chaperonin GroES.

It localises to the cytoplasm. It carries out the reaction ATP + H2O + a folded polypeptide = ADP + phosphate + an unfolded polypeptide.. Together with its co-chaperonin GroES, plays an essential role in assisting protein folding. The GroEL-GroES system forms a nano-cage that allows encapsulation of the non-native substrate proteins and provides a physical environment optimized to promote and accelerate protein folding. This is Chaperonin GroEL from Rickettsia akari (strain Hartford).